Reading from the N-terminus, the 110-residue chain is MSLSEARFHDLVDETQEKLEDIFDDSDLDIDMENSAGVLTVKFENGTQLIFSRQEPLRQLWLAAVSGGFHFDYDEESERWMCDKSEEQLGEMLERIVKQQAGTEFDFEGL.

It belongs to the frataxin family.

Its function is as follows. Involved in iron-sulfur (Fe-S) cluster assembly. May act as a regulator of Fe-S biogenesis. This Pseudomonas fluorescens (strain Pf0-1) protein is Iron-sulfur cluster assembly protein CyaY.